We begin with the raw amino-acid sequence, 273 residues long: Ribosomal RNA small subunit methyltransferase I (273 aa).

The protein belongs to the methyltransferase superfamily. RsmI family.

Its subcellular location is the cytoplasm. It carries out the reaction cytidine(1402) in 16S rRNA + S-adenosyl-L-methionine = 2'-O-methylcytidine(1402) in 16S rRNA + S-adenosyl-L-homocysteine + H(+). Its function is as follows. Catalyzes the 2'-O-methylation of the ribose of cytidine 1402 (C1402) in 16S rRNA. This chain is Ribosomal RNA small subunit methyltransferase I, found in Xylella fastidiosa (strain Temecula1 / ATCC 700964).